Here is a 74-residue protein sequence, read N- to C-terminus: Coleoptericin (74 aa).

The segment at 1-74 is disordered; the sequence is SLQGGAPNFP…TWHVGGTYRR (74 aa).

It belongs to the coleoptericin family.

It localises to the secreted. Functionally, responsible for the anti Gram-negative activity of immune hemolymph of Z.atratus. This chain is Coleoptericin, found in Zophobas atratus (Giant mealworm beetle).